A 190-amino-acid polypeptide reads, in one-letter code: dCTP deaminase, dUMP-forming (190 aa).

Residues 101-106, aspartate 119, 127-129, glutamine 148, tyrosine 162, and glutamine 174 each bind dCTP; these read KSSLGR and TLE. Glutamate 129 functions as the Proton donor/acceptor in the catalytic mechanism. Residues 162–190 are disordered; sequence YGSASAGSKYQGQRGPTPSRSYENFIKNT. Over residues 166-190 the composition is skewed to polar residues; that stretch reads SAGSKYQGQRGPTPSRSYENFIKNT.

The protein belongs to the dCTP deaminase family. In terms of assembly, homotrimer.

It carries out the reaction dCTP + 2 H2O = dUMP + NH4(+) + diphosphate. It participates in pyrimidine metabolism; dUMP biosynthesis; dUMP from dCTP: step 1/1. Its function is as follows. Bifunctional enzyme that catalyzes both the deamination of dCTP to dUTP and the hydrolysis of dUTP to dUMP without releasing the toxic dUTP intermediate. This Mycobacterium leprae (strain Br4923) protein is dCTP deaminase, dUMP-forming.